The following is a 441-amino-acid chain: S-adenosylmethionine synthase 1 (441 aa).

Glu9 contributes to the Mg(2+) binding site. His15 is an ATP binding site. Glu43 lines the K(+) pocket. Residues Glu56 and Gln99 each coordinate L-methionine. ATP contacts are provided by residues 167 to 169 (DGK), 235 to 238 (SGRF), Asp246, 252 to 253 (RK), Ala269, Lys273, and Lys277. Asp246 is a binding site for L-methionine. Residue Lys277 coordinates L-methionine.

This sequence belongs to the AdoMet synthase family. Homotetramer. Requires Mn(2+) as cofactor. Mg(2+) is required as a cofactor. The cofactor is Co(2+). K(+) serves as cofactor.

The protein localises to the cytoplasm. It catalyses the reaction L-methionine + ATP + H2O = S-adenosyl-L-methionine + phosphate + diphosphate. It participates in amino-acid biosynthesis; S-adenosyl-L-methionine biosynthesis; S-adenosyl-L-methionine from L-methionine: step 1/1. In terms of biological role, catalyzes the formation of S-adenosylmethionine from methionine and ATP. The reaction comprises two steps that are both catalyzed by the same enzyme: formation of S-adenosylmethionine (AdoMet) and triphosphate, and subsequent hydrolysis of the triphosphate. The chain is S-adenosylmethionine synthase 1 (SAMS1) from Daucus carota (Wild carrot).